The sequence spans 695 residues: Nucleoprotein (695 aa).

Coiled coils occupy residues 316-341 (VNVG…RRHE) and 372-399 (QTLA…VEDQ). Positions 424-611 (QARPMNRPTA…SPSAPQEDTR (188 aa)) are disordered. Residues 438–447 (VDDKIEHEST) are compositionally biased toward basic and acidic residues. 2 stretches are compositionally biased toward polar residues: residues 495-505 (RQSQDLNNSQG) and 537-552 (TTDS…SDNE). Positions 603–606 (PSAP) match the PTAP/PSAP motif motif.

This sequence belongs to the filoviruses nucleoprotein family. In terms of assembly, homooligomer. Homomultimerizes to form the nucleocapsid. Binds to viral genomic RNA. Interacts with VP35 and VP30 to form the nucleocapsid. Also interacts with VP24 and VP40. Post-translationally, phosphorylated.

Its subcellular location is the virion. The protein resides in the host cytoplasm. In terms of biological role, encapsidates the genome, protecting it from nucleases. The encapsidated genomic RNA is termed the nucleocapsid and serves as template for transcription and replication. During replication, encapsidation by NP is coupled to RNA synthesis and all replicative products are resistant to nucleases. This is Nucleoprotein (NP) from Chlorocebus aethiops (Green monkey).